A 220-amino-acid polypeptide reads, in one-letter code: Imidazoleglycerol-phosphate dehydratase (220 aa).

The protein belongs to the imidazoleglycerol-phosphate dehydratase family.

The catalysed reaction is D-erythro-1-(imidazol-4-yl)glycerol 3-phosphate = 3-(imidazol-4-yl)-2-oxopropyl phosphate + H2O. The protein operates within amino-acid biosynthesis; L-histidine biosynthesis; L-histidine from 5-phospho-alpha-D-ribose 1-diphosphate: step 6/9. The protein is Imidazoleglycerol-phosphate dehydratase (HIS3) of Eremothecium gossypii (strain ATCC 10895 / CBS 109.51 / FGSC 9923 / NRRL Y-1056) (Yeast).